The following is a 252-amino-acid chain: Chitooligosaccharide deacetylase (252 aa).

Mg(2+) contacts are provided by His-61 and His-125.

The protein belongs to the YdjC deacetylase family. ChbG subfamily. Homodimer. Mg(2+) is required as a cofactor.

The protein resides in the cytoplasm. The enzyme catalyses N,N'-diacetylchitobiose + H2O = N-acetyl-beta-D-glucosaminyl-(1-&gt;4)-D-glucosamine + acetate. It carries out the reaction diacetylchitobiose-6'-phosphate + H2O = N'-monoacetylchitobiose-6'-phosphate + acetate. Its pathway is glycan degradation; chitin degradation. In terms of biological role, involved in the degradation of chitin. ChbG is essential for growth on the acetylated chitooligosaccharides chitobiose and chitotriose but is dispensable for growth on cellobiose and chitosan dimer, the deacetylated form of chitobiose. Deacetylation of chitobiose-6-P and chitotriose-6-P is necessary for both the activation of the chb promoter by the regulatory protein ChbR and the hydrolysis of phosphorylated beta-glucosides by the phospho-beta-glucosidase ChbF. Catalyzes the removal of only one acetyl group from chitobiose-6-P to yield monoacetylchitobiose-6-P, the inducer of ChbR and the substrate of ChbF. In Salmonella paratyphi A (strain ATCC 9150 / SARB42), this protein is Chitooligosaccharide deacetylase.